Reading from the N-terminus, the 424-residue chain is 5-methylthioadenosine/S-adenosylhomocysteine deaminase (424 aa).

Residues H60 and H62 each coordinate Zn(2+). Positions 89 and 181 each coordinate substrate. H208 lines the Zn(2+) pocket. Substrate is bound by residues E211 and D296. D296 contacts Zn(2+).

The protein belongs to the metallo-dependent hydrolases superfamily. MTA/SAH deaminase family. It depends on Zn(2+) as a cofactor.

It carries out the reaction S-adenosyl-L-homocysteine + H2O + H(+) = S-inosyl-L-homocysteine + NH4(+). It catalyses the reaction S-methyl-5'-thioadenosine + H2O + H(+) = S-methyl-5'-thioinosine + NH4(+). Its function is as follows. Catalyzes the deamination of 5-methylthioadenosine and S-adenosyl-L-homocysteine into 5-methylthioinosine and S-inosyl-L-homocysteine, respectively. Is also able to deaminate adenosine. The protein is 5-methylthioadenosine/S-adenosylhomocysteine deaminase of Thermococcus sibiricus (strain DSM 12597 / MM 739).